The primary structure comprises 681 residues: DNA ligase (681 aa).

Residues 45–49 (DFDFD), 94–95 (SL), and Glu-120 each bind NAD(+). Catalysis depends on Lys-122, which acts as the N6-AMP-lysine intermediate. Positions 143, 177, 289, and 313 each coordinate NAD(+). Zn(2+) is bound by residues Cys-403, Cys-406, Cys-421, and Cys-426. The 89-residue stretch at 593–681 (ADQQPFAGQS…SLKIDFKNLI (89 aa)) folds into the BRCT domain.

This sequence belongs to the NAD-dependent DNA ligase family. LigA subfamily. Mg(2+) serves as cofactor. Requires Mn(2+) as cofactor.

It catalyses the reaction NAD(+) + (deoxyribonucleotide)n-3'-hydroxyl + 5'-phospho-(deoxyribonucleotide)m = (deoxyribonucleotide)n+m + AMP + beta-nicotinamide D-nucleotide.. In terms of biological role, DNA ligase that catalyzes the formation of phosphodiester linkages between 5'-phosphoryl and 3'-hydroxyl groups in double-stranded DNA using NAD as a coenzyme and as the energy source for the reaction. It is essential for DNA replication and repair of damaged DNA. This chain is DNA ligase, found in Leptospira interrogans serogroup Icterohaemorrhagiae serovar Lai (strain 56601).